A 1386-amino-acid polypeptide reads, in one-letter code: Putative ATP-dependent RNA helicase DHX57 (1386 aa).

Residues 1-11 (MSSSVRRKGKP) show a composition bias toward basic residues. 2 disordered regions span residues 1-106 (MSSS…MTSE) and 120-147 (EQDA…NDER). 2 stretches are compositionally biased toward gly residues: residues 12 to 23 (GKGGGKGSSRGG) and 35 to 50 (GSGG…GGGN). The stretch at 101–125 (LHMTSENQEKVKALLRDLQEQDADA) forms a coiled coil. Phosphoserine is present on residues S127 and S132. Positions 133 to 143 (GEEEDDEPDCC) are enriched in acidic residues. In terms of domain architecture, UBA spans 180-220 (TVSPFAVQKLSRYGFNTERCQAVLRMCDGDVGASLEHLLTQ). The C3H1-type zinc finger occupies 299 to 326 (ENSLEICKFYLKGNCKFGSKCRFKHEVP). A phosphoserine mark is found at S475, S477, and S480. The region spanning 554–721 (LNLLRKHQVV…FNSCPVITIP (168 aa)) is the Helicase ATP-binding domain. ATP is bound at residue 567-574 (GMTGCGKT). A DEVH box motif is present at residues 668–671 (DEVH). In terms of domain architecture, Helicase C-terminal spans 830-1010 (LIEALLEWIV…QLCLRIKILE (181 aa)).

The protein belongs to the DEAD box helicase family. DEAH subfamily.

It carries out the reaction ATP + H2O = ADP + phosphate + H(+). Functionally, probable ATP-binding RNA helicase. This is Putative ATP-dependent RNA helicase DHX57 (DHX57) from Homo sapiens (Human).